The primary structure comprises 55 residues: Large ribosomal subunit protein bL33 (55 aa).

Belongs to the bacterial ribosomal protein bL33 family.

In Dehalococcoides mccartyi (strain ATCC BAA-2266 / KCTC 15142 / 195) (Dehalococcoides ethenogenes (strain 195)), this protein is Large ribosomal subunit protein bL33.